Reading from the N-terminus, the 500-residue chain is Putative antiporter subunit mnhD2 (500 aa).

14 helical membrane passes run 2–22, 32–52, 78–98, 108–128, 130–150, 161–181, 209–229, 240–260, 273–293, 308–328, 330–350, 368–388, 403–423, and 450–470; these read MSNL…ILVF, ILSI…LIYV, LSLL…AYGF, FHLP…FLTS, LFNL…LVTL, IVYV…IGML, ISLV…FMWL, LAAL…IRFF, TLLV…VIAY, IGFI…GAIF, LAND…LVYM, FFGV…PFSG, GNYI…YSLF, and GLLS…PVVL.

The protein belongs to the CPA3 antiporters (TC 2.A.63) subunit D family. May form a heterooligomeric complex that consists of seven subunits: mnhA2, mnhB2, mnhC2, mnhD2, mnhE2, mnhF2 and mnhG2.

It is found in the cell membrane. This Staphylococcus epidermidis (strain ATCC 12228 / FDA PCI 1200) protein is Putative antiporter subunit mnhD2 (mnhD2).